The chain runs to 751 residues: MAALSGGGGSSSGGGGGGGGGGGGGDGGGGAEQGQALFNGDMEPEAGAGAAASSAADPAIPEEVWNIKQMIKLTQEHIEALLDKFGGEHNPPSIYLEAYEEYTSKLDALQQREQQLLESLVFQTPTDASRNNPKSPQKPIVRVFLPNKQRTVVPARCGVTVRDSLKKALMMRGLIPECCAVYRIQDGEKKPIGWDTDISWLTGEELHVEVLENVPLTTHNFVRKTFFTLAFCDFCRKLLFQGFRCQTCGYKFHQRCSTEVPLMCVNYDQLDLLFVSKFFEHHPVPQEEASFPETALPSGSSSAPPSDSTGPQILTSPSPSKSIPIPQPFRPADEDHRNQFGQRDRSSSAPNVHINTIEPVNIDDLIRDQGFRGDGGSTTGLSATPPASLPGSLTNVKALQKSPGPQRERKSSSSSSSEDRSRMKTLGRRDSSDDWEIPDGQITVGQRIGSGSFGTVYKGKWHGDVAVKMLNVTAPTPQQLQAFKNEVGVLRKTRHVNILLFMGYSTKPQLAIVTQWCEGSSLYHHLHIIETKFEMIKLIDIARQTAQGMDYLHAKSIIHRDLKSNNIFLHEDLTVKIGDFGLATVKSRWSGSHQFEQLSGSILWMAPEVIRMQDKNPYSFQSDVYAFGIVLYELMTGQLPYSNINNRDQIIFMVGRGYLSPDLSKVRSNCPKAMKRLMAECLKKKRDERPLFPQILASIELLARSLPKIHRSASEPSLNRAGFQTEDFSLYACASPKTPIQAGGYGGFPVH.

Residues 1-32 show a composition bias toward gly residues; it reads MAALSGGGGSSSGGGGGGGGGGGGGDGGGGAE. Positions 1–55 are disordered; the sequence is MAALSGGGGSSSGGGGGGGGGGGGGDGGGGAEQGQALFNGDMEPEAGAGAAASSA. Ala-2 is modified (N-acetylalanine). Residues 46–55 are compositionally biased toward low complexity; the sequence is AGAGAAASSA. The residue at position 135 (Ser-135) is a Phosphoserine. The region spanning 139–211 is the RBD domain; sequence PIVRVFLPNK…TGEELHVEVL (73 aa). The Zn(2+) site is built by His-219, Cys-232, Cys-235, Cys-245, Cys-248, His-253, Cys-256, and Cys-264. The interval 288 to 440 is disordered; sequence EASFPETALP…SSDDWEIPDG (153 aa). A compositionally biased stretch (low complexity) spans 297–324; the sequence is PSGSSSAPPSDSTGPQILTSPSPSKSIP. Ser-316 is modified (phosphoserine). Residues 331–346 show a composition bias toward basic and acidic residues; that stretch reads PADEDHRNQFGQRDRS. Ser-348 is modified (phosphoserine). Thr-356 carries the post-translational modification Phosphothreonine; by autocatalysis. Phosphothreonine is present on Thr-379. Position 382 is a phosphoserine (Ser-382). Thr-384 carries the post-translational modification Phosphothreonine. Over residues 406-432 the composition is skewed to basic and acidic residues; the sequence is QRERKSSSSSSSEDRSRMKTLGRRDSS. Phosphoserine is present on residues Ser-431 and Ser-432. Residues 442-702 enclose the Protein kinase domain; sequence ITVGQRIGSG…PQILASIELL (261 aa). ATP is bound by residues 448-456 and Lys-468; that span reads IGSGSFGTV. Asp-561 (proton acceptor) is an active-site residue. Residue Lys-563 forms a Glycyl lysine isopeptide (Lys-Gly) (interchain with G-Cter in ubiquitin) linkage. Position 656 is an omega-N-methylarginine; by PRMT5 (Arg-656). Residues Ser-714 and Ser-735 each carry the phosphoserine modification. Thr-738 is modified (phosphothreonine; by MAPK1).

It belongs to the protein kinase superfamily. TKL Ser/Thr protein kinase family. RAF subfamily. As to quaternary structure, monomer. Homodimer. Heterodimerizes with RAF1, and the heterodimer possesses a highly increased kinase activity compared to the respective homodimers or monomers. Heterodimerization is mitogen-regulated and enhanced by 14-3-3 proteins. MAPK1/ERK2 activation can induce a negative feedback that promotes the dissociation of the heterodimer by phosphorylating BRAF at Thr-738. Heterodimerizes (via N-terminus) with KSR1 (via N-terminus) or KSR2 (via N-terminus) in a MAP2K1-dependent manner. Interacts with MAP2K1 and MAP2K2. Found in a complex with at least BRAF, HRAS, MAP2K1, MAPK3 and RGS14. Interacts with RIT1. Interacts (via N-terminus) with RGS14 (via RBD domains); the interaction mediates the formation of a ternary complex with RAF1, a ternary complex inhibited by GNAI1. Interacts with DGKH. Interacts with PRMT5. Interacts with AKAP13, MAP2K1 and KSR1. Identified in a complex with AKAP13, KSR1 and MAP2K1. Interacts with FNIP1 and FNIP2. Zn(2+) serves as cofactor. Post-translationally, phosphorylation at Ser-348 by SGK1 inhibits its activity. Dephosphorylation of Ser-348 by the SHOC2-MRAS-PP1c (SMP) complex consisting of SHOC2, GTP-bound M-Ras/MRAS and the catalytic subunit of protein phosphatase 1 (PPP1CA, PPP1CB or PPP1CC); this relieves inactivation and stimulates kinase activity. Methylation by PRMT5 decreases stability and kinase activity. In terms of processing, ubiquitinated by RNF149; which leads to proteasomal degradation. Polyubiquitinated at Lys-615 in response to EGF.

The protein resides in the nucleus. It localises to the cytoplasm. The protein localises to the cell membrane. It carries out the reaction L-seryl-[protein] + ATP = O-phospho-L-seryl-[protein] + ADP + H(+). The enzyme catalyses L-threonyl-[protein] + ATP = O-phospho-L-threonyl-[protein] + ADP + H(+). With respect to regulation, in quiescent cells, maintained in an inactive state via an intramolecular interaction between the protein kinase and N-terminal domains. Following mitogen-mediated cell activation, binds via its RGB domain to active HRAS (GTP-bound) which releases the inhibitory intramolecular interaction between the two domains. This allows the MAP2K1-mediated dimerization of KSR1 or KSR2, and BRAF which activates BRAF. Its function is as follows. Involved in the transduction of mitogenic signals from the cell membrane to the nucleus. Phosphorylates MAP2K1, and thereby activates the MAP kinase signal transduction pathway. Phosphorylates PFKFB2. May play a role in the postsynaptic responses of hippocampal neurons. This is Serine/threonine-protein kinase B-raf from Mus musculus (Mouse).